Here is a 375-residue protein sequence, read N- to C-terminus: Anhydro-N-acetylmuramic acid kinase (375 aa).

12 to 19 contacts ATP; that stretch reads GTSLDGVD.

It belongs to the anhydro-N-acetylmuramic acid kinase family.

The catalysed reaction is 1,6-anhydro-N-acetyl-beta-muramate + ATP + H2O = N-acetyl-D-muramate 6-phosphate + ADP + H(+). It functions in the pathway amino-sugar metabolism; 1,6-anhydro-N-acetylmuramate degradation. Its pathway is cell wall biogenesis; peptidoglycan recycling. Functionally, catalyzes the specific phosphorylation of 1,6-anhydro-N-acetylmuramic acid (anhMurNAc) with the simultaneous cleavage of the 1,6-anhydro ring, generating MurNAc-6-P. Is required for the utilization of anhMurNAc either imported from the medium or derived from its own cell wall murein, and thus plays a role in cell wall recycling. In Mannheimia succiniciproducens (strain KCTC 0769BP / MBEL55E), this protein is Anhydro-N-acetylmuramic acid kinase.